A 489-amino-acid polypeptide reads, in one-letter code: Betaine aldehyde dehydrogenase (489 aa).

K(+)-binding residues include T26 and D93. 150–152 (GAW) serves as a coordination point for NAD(+). K162 acts as the Charge relay system in catalysis. 176 to 179 (KPSE) is a binding site for NAD(+). I180 serves as a coordination point for K(+). 229 to 232 (GVET) lines the NAD(+) pocket. Position 245 (L245) interacts with K(+). The active-site Proton acceptor is the E251. 3 residues coordinate NAD(+): G253, C285, and E386. The active-site Nucleophile is C285. C285 is subject to Cysteine sulfenic acid (-SOH). K(+)-binding residues include K456 and G459. E463 acts as the Charge relay system in catalysis.

Belongs to the aldehyde dehydrogenase family. Dimer of dimers. K(+) is required as a cofactor.

It catalyses the reaction betaine aldehyde + NAD(+) + H2O = glycine betaine + NADH + 2 H(+). The protein operates within amine and polyamine biosynthesis; betaine biosynthesis via choline pathway; betaine from betaine aldehyde: step 1/1. Functionally, involved in the biosynthesis of the osmoprotectant glycine betaine. Catalyzes the irreversible oxidation of betaine aldehyde to the corresponding acid. This is Betaine aldehyde dehydrogenase from Paraburkholderia phytofirmans (strain DSM 17436 / LMG 22146 / PsJN) (Burkholderia phytofirmans).